The following is a 594-amino-acid chain: NADH-ubiquinone oxidoreductase chain 5 (594 aa).

The next 15 membrane-spanning stretches (helical) occupy residues 1–21 (MNLF…PIMM), 43–63 (AFLI…EMII), 87–107 (IVFA…SMWY), 114–134 (INQF…LVTA), 137–157 (LFQL…LIGW), 171–191 (AILY…WFLS), 211–233 (LPLM…HPWL), 241–261 (TPVS…FLLI), 272–292 (LMQT…AMCA), 301–320 (IIAF…IGIN), 325–347 (AFLH…GSII), 366–386 (MPFT…VPFL), 409–429 (LLIT…IIFF), 457–477 (LMAG…PMTT), and 486–506 (LKMT…EITL).

It belongs to the complex I subunit 5 family. Core subunit of respiratory chain NADH dehydrogenase (Complex I) which is composed of 45 different subunits.

It is found in the mitochondrion inner membrane. It carries out the reaction a ubiquinone + NADH + 5 H(+)(in) = a ubiquinol + NAD(+) + 4 H(+)(out). In terms of biological role, core subunit of the mitochondrial membrane respiratory chain NADH dehydrogenase (Complex I) which catalyzes electron transfer from NADH through the respiratory chain, using ubiquinone as an electron acceptor. Essential for the catalytic activity and assembly of complex I. In Hippopotamus amphibius (Hippopotamus), this protein is NADH-ubiquinone oxidoreductase chain 5 (MT-ND5).